The sequence spans 220 residues: Ribosomal RNA small subunit methyltransferase Nep1 (220 aa).

S-adenosyl-L-methionine-binding positions include G178, G183, and 196-201 (IYKEPL).

Belongs to the class IV-like SAM-binding methyltransferase superfamily. RNA methyltransferase NEP1 family. In terms of assembly, homodimer.

The enzyme catalyses a pseudouridine in rRNA + S-adenosyl-L-methionine = an N(1)-methylpseudouridine in rRNA + S-adenosyl-L-homocysteine + H(+). Methyltransferase involved in ribosomal biogenesis. Specifically catalyzes the N1-methylation of the pseudouridine corresponding to position 914 in M.jannaschii 16S rRNA. The polypeptide is Ribosomal RNA small subunit methyltransferase Nep1 (Thermococcus sibiricus (strain DSM 12597 / MM 739)).